We begin with the raw amino-acid sequence, 561 residues long: Embryonal Fyn-associated substrate (561 aa).

The SH3 domain occupies 5–68 (TSTQLARALY…PANRVKLLPA (64 aa)). Disordered regions lie at residues 68 to 123 (AGPA…CPPS), 171 to 215 (HPLT…PGPP), 240 to 372 (LADG…HNEY), and 390 to 422 (DKAQ…ALSP). Positions 103–123 (VPPPARPCPTSGPPAGPCPPS) are enriched in pro residues. Residue Tyr-253 is modified to Phosphotyrosine; by SRC. Short sequence motifs (SH3-binding) lie at residues 305–311 (RPLPALP) and 335–341 (RPLPPPP). The span at 308–325 (PALPVPEAPSPSPVPSPA) shows a compositional bias: pro residues. The segment covering 352 to 372 (VEGDPEGREMEDDPAGHHNEY) has biased composition (basic and acidic residues). Positions 438–488 (FYAGQCQSHYSALQAAVAALMSSTQANQPPRLFVPHSKRVVVAAHRLVFVG) are divergent helix-loop-helix motif.

It belongs to the CAS family. Post-translationally, phosphorylated on multiple tyrosine residues. Phosphorylated on tyrosines by FYN and SRC. As to expression, the protein has been detected in lung and placenta.

Functionally, docking protein which plays a central coordinating role for tyrosine-kinase-based signaling related to cell adhesion. May serve as an activator of SRC and a downstream effector. Interacts with the SH3 domain of FYN and with CRK, SRC, and YES. This chain is Embryonal Fyn-associated substrate (EFS), found in Homo sapiens (Human).